The primary structure comprises 86 residues: Small ribosomal subunit protein bS20 (86 aa).

The segment covering 1-11 has biased composition (polar residues); sequence MANIKSQIKRN. Residues 1-20 are disordered; the sequence is MANIKSQIKRNLTNEKRHQA.

This sequence belongs to the bacterial ribosomal protein bS20 family.

Functionally, binds directly to 16S ribosomal RNA. The polypeptide is Small ribosomal subunit protein bS20 (Acholeplasma laidlawii (strain PG-8A)).